The primary structure comprises 187 residues: Large ribosomal subunit protein uL10 (187 aa).

Belongs to the universal ribosomal protein uL10 family. In terms of assembly, part of the ribosomal stalk of the 50S ribosomal subunit. The N-terminus interacts with L11 and the large rRNA to form the base of the stalk. The C-terminus forms an elongated spine to which L12 dimers bind in a sequential fashion forming a multimeric L10(L12)X complex.

Functionally, forms part of the ribosomal stalk, playing a central role in the interaction of the ribosome with GTP-bound translation factors. The polypeptide is Large ribosomal subunit protein uL10 (Synechococcus sp. (strain JA-2-3B'a(2-13)) (Cyanobacteria bacterium Yellowstone B-Prime)).